Here is a 505-residue protein sequence, read N- to C-terminus: L-carnitine/gamma-butyrobetaine antiporter (505 aa).

The next 12 helical transmembrane spans lie at 10–30, 51–71, 92–112, 143–163, 195–215, 231–251, 263–283, 316–336, 347–367, 403–423, 446–466, and 475–495; these read IEPK…WLTV, WGWA…WLVF, IFMM…SIEI, GPLP…FFFV, FYLV…TPLV, LDAI…ACGL, SYLS…SFIM, WTVF…IFLA, LCFG…TVLG, LSTA…VTLI, LLVR…LLAL, and AIIA…LSFI.

This sequence belongs to the BCCT transporter (TC 2.A.15) family. CaiT subfamily. As to quaternary structure, homotrimer.

The protein resides in the cell inner membrane. It catalyses the reaction 4-(trimethylamino)butanoate(in) + (R)-carnitine(out) = 4-(trimethylamino)butanoate(out) + (R)-carnitine(in). The protein operates within amine and polyamine metabolism; carnitine metabolism. Its function is as follows. Catalyzes the exchange of L-carnitine for gamma-butyrobetaine. This Salmonella typhi protein is L-carnitine/gamma-butyrobetaine antiporter.